The following is a 64-amino-acid chain: Large ribosomal subunit protein bL35 (64 aa).

It belongs to the bacterial ribosomal protein bL35 family.

This is Large ribosomal subunit protein bL35 from Shewanella sediminis (strain HAW-EB3).